The primary structure comprises 663 residues: DNA ligase (663 aa).

NAD(+)-binding positions include 34–38 (DYEYD), 83–84 (SL), and E114. Catalysis depends on K116, which acts as the N6-AMP-lysine intermediate. NAD(+) contacts are provided by R137, E171, K286, and K310. Residues C404, C407, C422, and C427 each coordinate Zn(2+). The 79-residue stretch at 585-663 (TVESPLTGKN…ADEFIKLANG (79 aa)) folds into the BRCT domain.

Belongs to the NAD-dependent DNA ligase family. LigA subfamily. The cofactor is Mg(2+). Mn(2+) serves as cofactor.

It catalyses the reaction NAD(+) + (deoxyribonucleotide)n-3'-hydroxyl + 5'-phospho-(deoxyribonucleotide)m = (deoxyribonucleotide)n+m + AMP + beta-nicotinamide D-nucleotide.. DNA ligase that catalyzes the formation of phosphodiester linkages between 5'-phosphoryl and 3'-hydroxyl groups in double-stranded DNA using NAD as a coenzyme and as the energy source for the reaction. It is essential for DNA replication and repair of damaged DNA. In Brachyspira hyodysenteriae (strain ATCC 49526 / WA1), this protein is DNA ligase.